A 423-amino-acid polypeptide reads, in one-letter code: MALASGPAMRALAGSARLGLGGYGAPKRGAYEWGVRSTRKPEPRPLDRVYEIPGLEPITYEGKKHFVPWLAKPIFPPWERGWIDPRFHRAAPIHEQPLYKEQPCYIFHQRCRLLEGMKQALWLTKTKLIEGLPKKVLSLVDDPTNHIENQEQRVLDIISHSRLWHSTEDIPKRETYCPLIVDNLLQLCKSQIIKHPSLARRTSAQNCSLATTWNRESLLLQVRGTSSTMLSAKDPLPPIASREEVEATRSHVLETFYPISPTIDLQECHVYEVKEDTGFREGYPYPHPHTLYILEKANLRPQRFLPEQLRAKMLLFAFANALAQARLLYGNTARVLEQPIVVQSVGTDGRVFQFLVLQLNTTDLTSSEGVKNLVWTDSDQLLYQHFWCRPVIKKKVVVEPVGPVDFQPETFKKFLALYLHGAV.

The transit peptide at 1-29 (MALASGPAMRALAGSARLGLGGYGAPKRG) directs the protein to the mitochondrion.

It belongs to the mitochondrion-specific ribosomal protein mL37 family. Component of the mitochondrial ribosome large subunit (39S) which comprises a 16S rRNA and about 50 distinct proteins.

The protein resides in the mitochondrion. The polypeptide is Large ribosomal subunit protein mL37 (Mrpl37) (Rattus norvegicus (Rat)).